Consider the following 582-residue polypeptide: UPF0329 protein ECU07_0070 (582 aa).

The tract at residues 326-386 is disordered; it reads EEKAKSKKKG…KTGKKSKGDQ (61 aa). The segment covering 330–339 has biased composition (basic residues); sequence KSKKKGKKKS. Over residues 344–354 the composition is skewed to basic and acidic residues; it reads EAKEEEKKESG.

It belongs to the UPF0329 family.

This is UPF0329 protein ECU07_0070 from Encephalitozoon cuniculi (strain GB-M1) (Microsporidian parasite).